A 249-amino-acid polypeptide reads, in one-letter code: Deoxyribose-phosphate aldolase (249 aa).

The Proton donor/acceptor role is filled by Asp-94. Lys-158 acts as the Schiff-base intermediate with acetaldehyde in catalysis. Catalysis depends on Lys-200, which acts as the Proton donor/acceptor.

It belongs to the DeoC/FbaB aldolase family. DeoC type 1 subfamily.

It localises to the cytoplasm. The enzyme catalyses 2-deoxy-D-ribose 5-phosphate = D-glyceraldehyde 3-phosphate + acetaldehyde. Its pathway is carbohydrate degradation; 2-deoxy-D-ribose 1-phosphate degradation; D-glyceraldehyde 3-phosphate and acetaldehyde from 2-deoxy-alpha-D-ribose 1-phosphate: step 2/2. Functionally, catalyzes a reversible aldol reaction between acetaldehyde and D-glyceraldehyde 3-phosphate to generate 2-deoxy-D-ribose 5-phosphate. The polypeptide is Deoxyribose-phosphate aldolase (Thermoplasma volcanium (strain ATCC 51530 / DSM 4299 / JCM 9571 / NBRC 15438 / GSS1)).